Here is a 412-residue protein sequence, read N- to C-terminus: Argininosuccinate synthase (412 aa).

ATP contacts are provided by residues 10-18 (AYSGGLDTS) and Ala-36. Residues Tyr-87 and Ser-92 each coordinate L-citrulline. At Tyr-87 the chain carries Phosphotyrosine. Lys-112 carries the N6-acetyllysine modification. Residue Tyr-113 is modified to Phosphotyrosine. An ATP-binding site is contributed by 115–123 (SHGATGKGN). 3 residues coordinate L-aspartate: Thr-119, Asn-123, and Asp-124. Asn-123 provides a ligand contact to L-citrulline. An L-citrulline-binding site is contributed by Arg-127. Lys-165 and Lys-176 each carry N6-acetyllysine; by CLOCK. 2 positions are modified to phosphoserine: Ser-177 and Ser-180. Residues Ser-180 and Ser-189 each contribute to the L-citrulline site. The residue at position 219 (Thr-219) is a Phosphothreonine. Residues Glu-270 and Tyr-282 each coordinate L-citrulline.

Belongs to the argininosuccinate synthase family. Type 1 subfamily. As to quaternary structure, homotetramer. Interacts with NMRAL1. Interacts with CLOCK; in a circadian manner. Forms tissue-specific complexes with ASL, SLC7A1, HSP90AA1 and nitric oxide synthase NOS1, NOS2 or NOS3; the complex regulates cell-autonomous L-arginine synthesis and citrulline recycling while channeling extracellular L-arginine to nitric oxide synthesis pathway. Post-translationally, acetylated by CLOCK in a circadian manner which negatively regulates its enzyme activity. Deacetylated by histone deacetylases.

The protein resides in the cytoplasm. It is found in the cytosol. It catalyses the reaction L-citrulline + L-aspartate + ATP = 2-(N(omega)-L-arginino)succinate + AMP + diphosphate + H(+). The protein operates within amino-acid biosynthesis; L-arginine biosynthesis; L-arginine from L-ornithine and carbamoyl phosphate: step 2/3. It participates in nitrogen metabolism; urea cycle; (N(omega)-L-arginino)succinate from L-aspartate and L-citrulline: step 1/1. Its function is as follows. One of the enzymes of the urea cycle, the metabolic pathway transforming neurotoxic amonia produced by protein catabolism into inocuous urea in the liver of ureotelic animals. Catalyzes the formation of arginosuccinate from aspartate, citrulline and ATP and together with ASL it is responsible for the biosynthesis of arginine in most body tissues. Indirectly, may be involved in the control of blood pressure. The sequence is that of Argininosuccinate synthase from Rattus norvegicus (Rat).